A 550-amino-acid chain; its full sequence is Retron Ec78 probable ATPase (550 aa).

Residues 93-100 (GNNGKGKT) carry the ATP-binding motif.

Functionally, probable ATPase component of antiviral defense system retron Ec78, composed of a non-coding RNA (ncRNA), a reverse transcriptase (RT), this protein and a putative HNH endonuclease. Expression of retron Ec78 confers protection against bacteriophage T5. At multiplicity of infection (MOI) of 0.02 cultures slow growth when infected with T5 but do not collapse, at MOI 2 cultures enter growth stasis. This is Retron Ec78 probable ATPase from Escherichia coli.